A 610-amino-acid chain; its full sequence is Isocitrate dehydrogenase kinase/phosphatase (610 aa).

ATP contacts are provided by residues 359–365 (APGFKGT) and Lys-380. The active site involves Asp-419.

It belongs to the AceK family.

It is found in the cytoplasm. It carries out the reaction L-seryl-[isocitrate dehydrogenase] + ATP = O-phospho-L-seryl-[isocitrate dehydrogenase] + ADP + H(+). In terms of biological role, bifunctional enzyme which can phosphorylate or dephosphorylate isocitrate dehydrogenase (IDH) on a specific serine residue. This is a regulatory mechanism which enables bacteria to bypass the Krebs cycle via the glyoxylate shunt in response to the source of carbon. When bacteria are grown on glucose, IDH is fully active and unphosphorylated, but when grown on acetate or ethanol, the activity of IDH declines drastically concomitant with its phosphorylation. This Rhodopseudomonas palustris (strain TIE-1) protein is Isocitrate dehydrogenase kinase/phosphatase.